The primary structure comprises 248 residues: tRNA uridine(34) hydroxylase (248 aa).

The Rhodanese domain maps to 127 to 221; it reads RGRPLVLLDT…YFEEVGGEGY (95 aa). The active-site Cysteine persulfide intermediate is C181.

Belongs to the TrhO family.

The enzyme catalyses uridine(34) in tRNA + AH2 + O2 = 5-hydroxyuridine(34) in tRNA + A + H2O. Functionally, catalyzes oxygen-dependent 5-hydroxyuridine (ho5U) modification at position 34 in tRNAs. The chain is tRNA uridine(34) hydroxylase from Xanthomonas axonopodis pv. citri (strain 306).